A 539-amino-acid chain; its full sequence is Membrane protein insertase YidC (539 aa).

The next 5 membrane-spanning stretches (helical) occupy residues Thr6–Ala26, Ser341–Val361, Leu416–Leu436, Leu454–Ile474, and Pro495–Val515.

Belongs to the OXA1/ALB3/YidC family. Type 1 subfamily. As to quaternary structure, interacts with the Sec translocase complex via SecD. Specifically interacts with transmembrane segments of nascent integral membrane proteins during membrane integration.

The protein localises to the cell inner membrane. Required for the insertion and/or proper folding and/or complex formation of integral membrane proteins into the membrane. Involved in integration of membrane proteins that insert both dependently and independently of the Sec translocase complex, as well as at least some lipoproteins. Aids folding of multispanning membrane proteins. This Vibrio vulnificus (strain CMCP6) protein is Membrane protein insertase YidC.